The primary structure comprises 95 residues: Aspartyl/glutamyl-tRNA(Asn/Gln) amidotransferase subunit C (95 aa).

Belongs to the GatC family. In terms of assembly, heterotrimer of A, B and C subunits.

The catalysed reaction is L-glutamyl-tRNA(Gln) + L-glutamine + ATP + H2O = L-glutaminyl-tRNA(Gln) + L-glutamate + ADP + phosphate + H(+). The enzyme catalyses L-aspartyl-tRNA(Asn) + L-glutamine + ATP + H2O = L-asparaginyl-tRNA(Asn) + L-glutamate + ADP + phosphate + 2 H(+). Functionally, allows the formation of correctly charged Asn-tRNA(Asn) or Gln-tRNA(Gln) through the transamidation of misacylated Asp-tRNA(Asn) or Glu-tRNA(Gln) in organisms which lack either or both of asparaginyl-tRNA or glutaminyl-tRNA synthetases. The reaction takes place in the presence of glutamine and ATP through an activated phospho-Asp-tRNA(Asn) or phospho-Glu-tRNA(Gln). In Azorhizobium caulinodans (strain ATCC 43989 / DSM 5975 / JCM 20966 / LMG 6465 / NBRC 14845 / NCIMB 13405 / ORS 571), this protein is Aspartyl/glutamyl-tRNA(Asn/Gln) amidotransferase subunit C.